The primary structure comprises 218 residues: UPF0502 protein Shewana3_1622 (218 aa).

This sequence belongs to the UPF0502 family.

The polypeptide is UPF0502 protein Shewana3_1622 (Shewanella sp. (strain ANA-3)).